Reading from the N-terminus, the 236-residue chain is uncharacterized protein (236 aa).

A run of 7 helical transmembrane segments spans residues 32–52, 61–81, 90–110, 115–135, 144–164, 167–187, and 208–228; these read MALA…VEPI, FGTI…MGFG, ILFW…ALIY, IART…YGYS, GSFF…NLFL, SSLS…LIAW, and LSIM…LYLM.

This sequence belongs to the BI1 family.

The protein localises to the cell membrane. This is an uncharacterized protein from Rickettsia prowazekii (strain Madrid E).